The chain runs to 412 residues: Serine hydroxymethyltransferase (412 aa).

Residues Leu-121 and 125–127 contribute to the (6S)-5,6,7,8-tetrahydrofolate site; that span reads GHL. Position 230 is an N6-(pyridoxal phosphate)lysine (Lys-230). 353-355 lines the (6S)-5,6,7,8-tetrahydrofolate pocket; that stretch reads TPF.

The protein belongs to the SHMT family. In terms of assembly, homodimer. Pyridoxal 5'-phosphate serves as cofactor.

The protein localises to the cytoplasm. The enzyme catalyses (6R)-5,10-methylene-5,6,7,8-tetrahydrofolate + glycine + H2O = (6S)-5,6,7,8-tetrahydrofolate + L-serine. The protein operates within one-carbon metabolism; tetrahydrofolate interconversion. It participates in amino-acid biosynthesis; glycine biosynthesis; glycine from L-serine: step 1/1. In terms of biological role, catalyzes the reversible interconversion of serine and glycine with tetrahydrofolate (THF) serving as the one-carbon carrier. This reaction serves as the major source of one-carbon groups required for the biosynthesis of purines, thymidylate, methionine, and other important biomolecules. Also exhibits THF-independent aldolase activity toward beta-hydroxyamino acids, producing glycine and aldehydes, via a retro-aldol mechanism. The protein is Serine hydroxymethyltransferase of Finegoldia magna (strain ATCC 29328 / DSM 20472 / WAL 2508) (Peptostreptococcus magnus).